We begin with the raw amino-acid sequence, 363 residues long: MNASAAALNESQVVAVAAEGAAAAATAAGTPDTSEWGPPAASAALGGGGGPNGSLELSSQLPAGPSGLLLSAVNPWDVLLCVSGTVIAGENALVVALIASTPALRTPMFVLVGSLATADLLAGCGLILHFVFQYVVPSETVSLLMVGFLVASFAASVSSLLAITVDRYLSLYNALTYYSRRTLLGVHLLLAATWTVSLGLGLLPVLGWNCLADRASCSVVRPLTRSHVALLSTSFFVVFGIMLHLYVRICQVVWRHAHQIALQQHCLAPPHLAATRKGVGTLAVVLGTFGASWLPFAIYCVVGSQEDPAIYTYATLLPATYNSMINPIIYAFRNQEIQRALWLLFCGCFQSKVPFRSRSPSEV.

The Extracellular segment spans residues 1–75 (MNASAAALNE…SGLLLSAVNP (75 aa)). N-linked (GlcNAc...) asparagine glycans are attached at residues Asn-2 and Asn-9. The interval 28 to 51 (AGTPDTSEWGPPAASAALGGGGGP) is disordered. N-linked (GlcNAc...) asparagine glycosylation occurs at Asn-52. Residues 76 to 95 (WDVLLCVSGTVIAGENALVV) traverse the membrane as a helical segment. Over 96–107 (ALIASTPALRTP) the chain is Cytoplasmic. A helical membrane pass occupies residues 108 to 131 (MFVLVGSLATADLLAGCGLILHFV). Residues 132-143 (FQYVVPSETVSL) are Extracellular-facing. The helical transmembrane segment at 144-165 (LMVGFLVASFAASVSSLLAITV) threads the bilayer. Residues 166–186 (DRYLSLYNALTYYSRRTLLGV) are Cytoplasmic-facing. A helical transmembrane segment spans residues 187–206 (HLLLAATWTVSLGLGLLPVL). Residues 207–231 (GWNCLADRASCSVVRPLTRSHVALL) are Extracellular-facing. The chain crosses the membrane as a helical span at residues 232–250 (STSFFVVFGIMLHLYVRIC). Over 251–278 (QVVWRHAHQIALQQHCLAPPHLAATRKG) the chain is Cytoplasmic. The chain crosses the membrane as a helical span at residues 279 to 305 (VGTLAVVLGTFGASWLPFAIYCVVGSQ). Over 306–310 (EDPAI) the chain is Extracellular. Residues 311–332 (YTYATLLPATYNSMINPIIYAF) form a helical membrane-spanning segment. The Cytoplasmic portion of the chain corresponds to 333 to 363 (RNQEIQRALWLLFCGCFQSKVPFRSRSPSEV). The S-palmitoyl cysteine moiety is linked to residue Cys-346. Phosphoserine occurs at positions 357, 359, and 361.

This sequence belongs to the G-protein coupled receptor 1 family. Expressed in the brain, with a prominent distribution in striatum.

It is found in the cell membrane. Orphan receptor with constitutive G(s) signaling activity that activate cyclic AMP. Promotes neurite outgrowth and blocks myelin inhibition in neurons. The sequence is that of G-protein coupled receptor 6 (Gpr6) from Rattus norvegicus (Rat).